The chain runs to 660 residues: Replication restart protein PriA (660 aa).

Residues 145–313 (IIGSEKTNVF…KNNQIKKIIM (169 aa)) enclose the Helicase ATP-binding domain. 158 to 165 (GIPGSGKT) contacts ATP. Positions 256 to 259 (DEEH) match the DEAH box motif. Residues C370, C373, C379, C382, C397, C400, C410, and C413 each contribute to the Zn(2+) site. Positions 405-557 (KTASHCPQCE…QFYEEELDIR (153 aa)) constitute a Helicase C-terminal domain.

It belongs to the helicase family. PriA subfamily. Component of the replication restart primosome. The cofactor is Zn(2+).

It catalyses the reaction Couples ATP hydrolysis with the unwinding of duplex DNA by translocating in the 3'-5' direction.. The enzyme catalyses ATP + H2O = ADP + phosphate + H(+). Functionally, initiates the restart of stalled replication forks, which reloads the replicative helicase on sites other than the origin of replication. Recognizes and binds to abandoned replication forks and remodels them to uncover a helicase loading site. Promotes assembly of the primosome at these replication forks. The sequence is that of Replication restart protein PriA from Borreliella burgdorferi (strain ATCC 35210 / DSM 4680 / CIP 102532 / B31) (Borrelia burgdorferi).